Here is a 593-residue protein sequence, read N- to C-terminus: MNNRQINSLWSSIIIEELIRQGADFFCISPGSRSTPLTVAIARNPKARWKMFADERSAAFFALGYGRATARPAVLICTSGTAVANYFPAIVEASMDFQPILVLSADRPFELLECGANQTIRQENIFGSYTRWHMQLPVPSKEIPLKALLSTIAHAVVKTIGSPAGPVHLNQPFREPLEPEIPDLKDAWAAPLQEWLENGKPSGKSALPEKEPDAETLSLLREALAVAKEPLIIAGNMQKPEEAEAVEQLALELQIPLYTDFSSGLRLKSTTRPWQLAFASPHFTRHFKPDLVLHFGGHIIAKQPAAAIREWKPKHYIVVKNHANRLSPDHNVTLSIEASIASTAAKLKGCRTLSSGIINAATEEFFRRAEEEIDAECIGNKPVTEISAARLVSRLITAQQRLFLSNSMPVRDMDNFACSSHPHAIRSAINRGASGIDGIISTAAGFAEGDGKSTTLIIGDIAFLHDLNALSLLGAMTVPLQIIVLNNNGGGIFSFLPIAEYRDLMETHFATPQNYSIRSAAETFGLDYACPQTNQEFTRCYLEATGSPRSIIIELRSNRAENLHHHRALQARIETLTNHLYQGFIEKISEQPN.

This sequence belongs to the TPP enzyme family. MenD subfamily. In terms of assembly, homodimer. Requires Mg(2+) as cofactor. Mn(2+) is required as a cofactor. It depends on thiamine diphosphate as a cofactor.

The catalysed reaction is isochorismate + 2-oxoglutarate + H(+) = 5-enolpyruvoyl-6-hydroxy-2-succinyl-cyclohex-3-ene-1-carboxylate + CO2. It functions in the pathway quinol/quinone metabolism; 1,4-dihydroxy-2-naphthoate biosynthesis; 1,4-dihydroxy-2-naphthoate from chorismate: step 2/7. The protein operates within quinol/quinone metabolism; menaquinone biosynthesis. Its function is as follows. Catalyzes the thiamine diphosphate-dependent decarboxylation of 2-oxoglutarate and the subsequent addition of the resulting succinic semialdehyde-thiamine pyrophosphate anion to isochorismate to yield 2-succinyl-5-enolpyruvyl-6-hydroxy-3-cyclohexene-1-carboxylate (SEPHCHC). This is 2-succinyl-5-enolpyruvyl-6-hydroxy-3-cyclohexene-1-carboxylate synthase from Pelodictyon phaeoclathratiforme (strain DSM 5477 / BU-1).